The primary structure comprises 169 residues: NAD(P)H-quinone oxidoreductase subunit J, chloroplastic (169 aa).

It belongs to the complex I 30 kDa subunit family. As to quaternary structure, NDH is composed of at least 16 different subunits, 5 of which are encoded in the nucleus.

The protein localises to the plastid. The protein resides in the chloroplast thylakoid membrane. The catalysed reaction is a plastoquinone + NADH + (n+1) H(+)(in) = a plastoquinol + NAD(+) + n H(+)(out). The enzyme catalyses a plastoquinone + NADPH + (n+1) H(+)(in) = a plastoquinol + NADP(+) + n H(+)(out). Its function is as follows. NDH shuttles electrons from NAD(P)H:plastoquinone, via FMN and iron-sulfur (Fe-S) centers, to quinones in the photosynthetic chain and possibly in a chloroplast respiratory chain. The immediate electron acceptor for the enzyme in this species is believed to be plastoquinone. Couples the redox reaction to proton translocation, and thus conserves the redox energy in a proton gradient. The polypeptide is NAD(P)H-quinone oxidoreductase subunit J, chloroplastic (Staurastrum punctulatum (Green alga)).